Here is a 343-residue protein sequence, read N- to C-terminus: S-adenosylmethionine:tRNA ribosyltransferase-isomerase (343 aa).

Belongs to the QueA family. In terms of assembly, monomer.

Its subcellular location is the cytoplasm. It catalyses the reaction 7-aminomethyl-7-carbaguanosine(34) in tRNA + S-adenosyl-L-methionine = epoxyqueuosine(34) in tRNA + adenine + L-methionine + 2 H(+). It participates in tRNA modification; tRNA-queuosine biosynthesis. In terms of biological role, transfers and isomerizes the ribose moiety from AdoMet to the 7-aminomethyl group of 7-deazaguanine (preQ1-tRNA) to give epoxyqueuosine (oQ-tRNA). This is S-adenosylmethionine:tRNA ribosyltransferase-isomerase from Coxiella burnetii (strain RSA 331 / Henzerling II).